We begin with the raw amino-acid sequence, 279 residues long: NH(3)-dependent NAD(+) synthetase (279 aa).

46–53 (GISGGQDS) contributes to the ATP binding site. D52 lines the Mg(2+) pocket. Position 145 (R145) interacts with deamido-NAD(+). T165 contributes to the ATP binding site. A Mg(2+)-binding site is contributed by E170. K178 and D185 together coordinate deamido-NAD(+). Residues K194 and T216 each contribute to the ATP site. 265–266 (HK) provides a ligand contact to deamido-NAD(+).

The protein belongs to the NAD synthetase family. As to quaternary structure, homodimer.

It catalyses the reaction deamido-NAD(+) + NH4(+) + ATP = AMP + diphosphate + NAD(+) + H(+). The protein operates within cofactor biosynthesis; NAD(+) biosynthesis; NAD(+) from deamido-NAD(+) (ammonia route): step 1/1. In terms of biological role, catalyzes the ATP-dependent amidation of deamido-NAD to form NAD. Uses ammonia as a nitrogen source. In Rhodococcus jostii (strain RHA1), this protein is NH(3)-dependent NAD(+) synthetase.